Here is a 345-residue protein sequence, read N- to C-terminus: Tropomodulin-4 (345 aa).

The tract at residues 42 to 63 is disordered; the sequence is NMLLPAGLRQRDQTKKSPTGPL.

The protein belongs to the tropomodulin family. In terms of assembly, binds to the N-terminus of tropomyosin and to actin. In terms of tissue distribution, highly expressed in skeletal muscle.

It is found in the cytoplasm. It localises to the cytoskeleton. In terms of biological role, blocks the elongation and depolymerization of the actin filaments at the pointed end. The Tmod/TM complex contributes to the formation of the short actin protofilament, which in turn defines the geometry of the membrane skeleton. The polypeptide is Tropomodulin-4 (TMOD4) (Homo sapiens (Human)).